The chain runs to 84 residues: Putative membrane protein insertion efficiency factor (84 aa).

It belongs to the UPF0161 family.

The protein localises to the cell inner membrane. Functionally, could be involved in insertion of integral membrane proteins into the membrane. This chain is Putative membrane protein insertion efficiency factor, found in Shewanella sp. (strain ANA-3).